The sequence spans 144 residues: Oxoglutarate dehydrogenase inhibitor (144 aa).

Thr-14 is modified (phosphothreonine). An FHA domain is found at Thr-68–Lys-117.

The protein resides in the cytoplasm. In terms of biological role, an essential component of the PknG signaling pathway. When unphosphorylated, it inhibits the activity of 2-oxoglutarate dehydrogenase. When phosphorylated it does not inhibit 2-oxoglutarate dehydrogenase. In Corynebacterium jeikeium (strain K411), this protein is Oxoglutarate dehydrogenase inhibitor (odhI).